A 104-amino-acid polypeptide reads, in one-letter code: Ribonuclease P protein component 4 (104 aa).

4 residues coordinate Zn(2+): Cys57, Cys60, Cys83, and Cys86.

Belongs to the eukaryotic/archaeal RNase P protein component 4 family. In terms of assembly, consists of a catalytic RNA component and at least 4-5 protein subunits. Zn(2+) is required as a cofactor.

It is found in the cytoplasm. The enzyme catalyses Endonucleolytic cleavage of RNA, removing 5'-extranucleotides from tRNA precursor.. In terms of biological role, part of ribonuclease P, a protein complex that generates mature tRNA molecules by cleaving their 5'-ends. The chain is Ribonuclease P protein component 4 from Saccharolobus islandicus (strain L.S.2.15 / Lassen #1) (Sulfolobus islandicus).